The following is a 292-amino-acid chain: Cyclin-dependent kinase 5 homolog (292 aa).

The 283-residue stretch at 4–286 folds into the Protein kinase domain; the sequence is YEKLEKIGEG…AEQAMQHPYF (283 aa). ATP contacts are provided by residues 10-18 and lysine 33; that span reads IGEGTYGTV. Residue threonine 14 is modified to Phosphothreonine. A Phosphotyrosine modification is found at tyrosine 15. Catalysis depends on aspartate 126, which acts as the Proton acceptor. Residue serine 159 is modified to Phosphoserine.

This sequence belongs to the protein kinase superfamily. CMGC Ser/Thr protein kinase family. CDC2/CDKX subfamily.

It catalyses the reaction L-seryl-[protein] + ATP = O-phospho-L-seryl-[protein] + ADP + H(+). It carries out the reaction L-threonyl-[protein] + ATP = O-phospho-L-threonyl-[protein] + ADP + H(+). Functionally, probably involved in the control of the cell cycle. Interacts with D1 and D3-type G1 cyclins. Possible regulator of neuronal differentiation and/or development. This Glossina morsitans morsitans (Savannah tsetse fly) protein is Cyclin-dependent kinase 5 homolog (Cdk5).